Here is a 555-residue protein sequence, read N- to C-terminus: MLRHAIETNVQIFTKFLVISASAVGIGYARKLFDQRPQRDDSFLSNSMIKAYLETRQYPDSFALYRDLRKETCFAPDNFTFTTLTKSCSLSMCVYQGLQLHSQIWRFGFCADMYVSTGVVDMYAKFGKMGCARNAFDEMPHRSEVSWTALISGYIRCGELDLASKLFDQMPHVKDVVIYNAMMDGFVKSGDMTSARRLFDEMTHKTVITWTTMIHGYCNIKDIDAARKLFDAMPERNLVSWNTMIGGYCQNKQPQEGIRLFQEMQATTSLDPDDVTILSVLPAISDTGALSLGEWCHCFVQRKKLDKKVKVCTAILDMYSKCGEIEKAKRIFDEMPEKQVASWNAMIHGYALNGNARAALDLFVTMMIEEKPDEITMLAVITACNHGGLVEEGRKWFHVMREMGLNAKIEHYGCMVDLLGRAGSLKEAEDLITNMPFEPNGIILSSFLSACGQYKDIERAERILKKAVELEPQNDGNYVLLRNLYAADKRWDDFGMVKNVMRKNQAKKEVGCSLIEINYIVSEFISGDTTHPHRRSIHLVLGDLLMHMNEEKYNW.

PPR repeat units follow at residues D41–A75, D77–A111, D112–R142, S143–V173, D175–K205, T206–S240, W241–T267, D273–K307, K308–S342, W343–E370, D373–A407, and K408–E438. The tract at residues I443–N518 is type E motif. The tract at residues Y519–N549 is type E(+) motif.

The protein belongs to the PPR family. PCMP-E subfamily.

In Arabidopsis thaliana (Mouse-ear cress), this protein is Pentatricopeptide repeat-containing protein At2g44880 (PCMP-E9).